The primary structure comprises 129 residues: Phosphoribosyl-AMP cyclohydrolase (129 aa).

Mg(2+) is bound at residue aspartate 77. Cysteine 78 provides a ligand contact to Zn(2+). 2 residues coordinate Mg(2+): aspartate 79 and aspartate 81. 2 residues coordinate Zn(2+): cysteine 94 and cysteine 101.

It belongs to the PRA-CH family. As to quaternary structure, homodimer. It depends on Mg(2+) as a cofactor. Requires Zn(2+) as cofactor.

It is found in the cytoplasm. The catalysed reaction is 1-(5-phospho-beta-D-ribosyl)-5'-AMP + H2O = 1-(5-phospho-beta-D-ribosyl)-5-[(5-phospho-beta-D-ribosylamino)methylideneamino]imidazole-4-carboxamide. It participates in amino-acid biosynthesis; L-histidine biosynthesis; L-histidine from 5-phospho-alpha-D-ribose 1-diphosphate: step 3/9. In terms of biological role, catalyzes the hydrolysis of the adenine ring of phosphoribosyl-AMP. This Pelotomaculum thermopropionicum (strain DSM 13744 / JCM 10971 / SI) protein is Phosphoribosyl-AMP cyclohydrolase.